Consider the following 257-residue polypeptide: Large ribosomal subunit protein uL2 (257 aa).

Residues Lys42 and Lys149 each participate in a glycyl lysine isopeptide (Lys-Gly) (interchain with G-Cter in SUMO2) cross-link. The segment at 207 to 232 is disordered; it reads VEHPFGGGNHQHIGKPSTIRRDAPAG. His216 bears the (3S)-3-hydroxyhistidine mark. Glycyl lysine isopeptide (Lys-Gly) (interchain with G-Cter in SUMO2) cross-links involve residues Lys234 and Lys250.

It belongs to the universal ribosomal protein uL2 family. As to quaternary structure, component of the large ribosomal subunit. Interacts with CRY1. Post-translationally, hydroxylated on His-216 by RIOX1. The modification is impaired by hypoxia.

The protein localises to the cytoplasm. Its function is as follows. Component of the large ribosomal subunit. The ribosome is a large ribonucleoprotein complex responsible for the synthesis of proteins in the cell. The polypeptide is Large ribosomal subunit protein uL2 (RPL8) (Bos taurus (Bovine)).